Here is a 497-residue protein sequence, read N- to C-terminus: Aspartyl/glutamyl-tRNA(Asn/Gln) amidotransferase subunit B (497 aa).

This sequence belongs to the GatB/GatE family. GatB subfamily. As to quaternary structure, heterotrimer of A, B and C subunits.

The enzyme catalyses L-glutamyl-tRNA(Gln) + L-glutamine + ATP + H2O = L-glutaminyl-tRNA(Gln) + L-glutamate + ADP + phosphate + H(+). The catalysed reaction is L-aspartyl-tRNA(Asn) + L-glutamine + ATP + H2O = L-asparaginyl-tRNA(Asn) + L-glutamate + ADP + phosphate + 2 H(+). Its function is as follows. Allows the formation of correctly charged Asn-tRNA(Asn) or Gln-tRNA(Gln) through the transamidation of misacylated Asp-tRNA(Asn) or Glu-tRNA(Gln) in organisms which lack either or both of asparaginyl-tRNA or glutaminyl-tRNA synthetases. The reaction takes place in the presence of glutamine and ATP through an activated phospho-Asp-tRNA(Asn) or phospho-Glu-tRNA(Gln). The sequence is that of Aspartyl/glutamyl-tRNA(Asn/Gln) amidotransferase subunit B from Rhodopirellula baltica (strain DSM 10527 / NCIMB 13988 / SH1).